A 727-amino-acid chain; its full sequence is Prolyl endopeptidase-like (727 aa).

Catalysis depends on charge relay system residues Ser559, Asp645, and His690.

The protein belongs to the peptidase S9A family. As to quaternary structure, homodimer. Interacts with the AP-1 complex.

The protein localises to the cytoplasm. Its subcellular location is the cytosol. The protein resides in the golgi apparatus. It is found in the trans-Golgi network. It localises to the cytoskeleton. The protein localises to the nucleus. Functionally, serine peptidase whose precise substrate specificity remains unclear. Does not cleave peptides after a arginine or lysine residue. Regulates trans-Golgi network morphology and sorting by regulating the membrane binding of the AP-1 complex. May play a role in the regulation of synaptic vesicle exocytosis. The sequence is that of Prolyl endopeptidase-like (PREPL) from Macaca fascicularis (Crab-eating macaque).